A 598-amino-acid chain; its full sequence is Elongation factor 4 (598 aa).

Residues 2-184 enclose the tr-type G domain; that stretch reads KNIRNFSIIA…RLVKEIPAPE (183 aa). Residues 14–19 and 131–134 each bind GTP; these read DHGKST and NKID.

It belongs to the TRAFAC class translation factor GTPase superfamily. Classic translation factor GTPase family. LepA subfamily.

The protein resides in the cell inner membrane. The enzyme catalyses GTP + H2O = GDP + phosphate + H(+). Its function is as follows. Required for accurate and efficient protein synthesis under certain stress conditions. May act as a fidelity factor of the translation reaction, by catalyzing a one-codon backward translocation of tRNAs on improperly translocated ribosomes. Back-translocation proceeds from a post-translocation (POST) complex to a pre-translocation (PRE) complex, thus giving elongation factor G a second chance to translocate the tRNAs correctly. Binds to ribosomes in a GTP-dependent manner. The sequence is that of Elongation factor 4 from Proteus mirabilis (strain HI4320).